The primary structure comprises 259 residues: Global transcriptional regulator CodY (259 aa).

Positions 1-155 (MELLAKTRKL…SSTVVGMEIL (155 aa)) are GAF domain. The H-T-H motif DNA-binding region spans 203–222 (ASKIADRVGITRSVIVNALR). Ser-215 carries the post-translational modification Phosphoserine.

This sequence belongs to the CodY family.

The protein localises to the cytoplasm. Its function is as follows. DNA-binding global transcriptional regulator which is involved in the adaptive response to starvation and acts by directly or indirectly controlling the expression of numerous genes in response to nutrient availability. During rapid exponential growth, CodY is highly active and represses genes whose products allow adaptation to nutrient depletion. This is Global transcriptional regulator CodY from Bacillus mycoides (strain KBAB4) (Bacillus weihenstephanensis).